We begin with the raw amino-acid sequence, 266 residues long: Non-structural maintenance of chromosomes element 1 homolog (266 aa).

The interval 1-102 is interaction with NSMCE3; that stretch reads MQGSTRRAGA…SVSKMATDFA (102 aa). Residues 191-232 form an RING-type; atypical zinc finger; that stretch reads CNICHGLLIQGQSCETCGIRMHLPCVAKYFQSIPEPHCPHCN. Residues 246-266 are disordered; the sequence is EKEREAGISKSSRKSLRTRQH. Over residues 256 to 266 the composition is skewed to basic residues; sequence SSRKSLRTRQH.

Belongs to the NSE1 family. Component of the SMC5-SMC6 complex which consists at least of SMC5, SMC6, NSMCE2, NSMCE1, NSMCE4A or EID3 and NSMCE3. NSMCE1, NSMCE4A or EID3 and NSMCE3 probably form a subcomplex that bridges the head domains of the SMC5-SMC6 heterodimer. Interacts with NSMCE3. Post-translationally, ubiquitinated.

It is found in the nucleus. It localises to the chromosome. The protein resides in the telomere. The catalysed reaction is S-ubiquitinyl-[E2 ubiquitin-conjugating enzyme]-L-cysteine + [acceptor protein]-L-lysine = [E2 ubiquitin-conjugating enzyme]-L-cysteine + N(6)-ubiquitinyl-[acceptor protein]-L-lysine.. Its function is as follows. RING-type zinc finger-containing E3 ubiquitin ligase that assembles with melanoma antigen protein (MAGE) to catalyze the direct transfer of ubiquitin from E2 ubiquitin-conjugating enzyme to a specific substrate. Within MAGE-RING ubiquitin ligase complex, MAGE stimulates and specifies ubiquitin ligase activity likely through recruitment and/or stabilization of the E2 ubiquitin-conjugating enzyme at the E3:substrate complex. Involved in maintenance of genome integrity, DNA damage response and DNA repair. NSMCE3/MAGEG1 and NSMCE1 ubiquitin ligase are components of SMC5-SMC6 complex and may positively regulate homologous recombination-mediated DNA repair. This is Non-structural maintenance of chromosomes element 1 homolog (Nsmce1) from Mus musculus (Mouse).